Here is a 369-residue protein sequence, read N- to C-terminus: tRNA/tmRNA (uracil-C(5))-methyltransferase (369 aa).

Residues Gln190, Tyr218, Asn223, Glu239, and Asp301 each coordinate S-adenosyl-L-methionine. Cys326 acts as the Nucleophile in catalysis. Residue Glu360 is the Proton acceptor of the active site.

This sequence belongs to the class I-like SAM-binding methyltransferase superfamily. RNA M5U methyltransferase family. TrmA subfamily.

The catalysed reaction is uridine(54) in tRNA + S-adenosyl-L-methionine = 5-methyluridine(54) in tRNA + S-adenosyl-L-homocysteine + H(+). It carries out the reaction uridine(341) in tmRNA + S-adenosyl-L-methionine = 5-methyluridine(341) in tmRNA + S-adenosyl-L-homocysteine + H(+). Its function is as follows. Dual-specificity methyltransferase that catalyzes the formation of 5-methyluridine at position 54 (m5U54) in all tRNAs, and that of position 341 (m5U341) in tmRNA (transfer-mRNA). This Vibrio vulnificus (strain YJ016) protein is tRNA/tmRNA (uracil-C(5))-methyltransferase.